The following is a 280-amino-acid chain: Shikimate dehydrogenase (NADP(+)) (280 aa).

Residues 20–22 (SRS) and Thr-67 each bind shikimate. Lys-71 functions as the Proton acceptor in the catalytic mechanism. NADP(+) is bound at residue Asp-82. Shikimate contacts are provided by Asn-91 and Asp-106. Residues 131 to 135 (GAGGS) and Leu-220 contribute to the NADP(+) site. A shikimate-binding site is contributed by Tyr-222. Gly-243 is an NADP(+) binding site.

It belongs to the shikimate dehydrogenase family. In terms of assembly, homodimer.

It catalyses the reaction shikimate + NADP(+) = 3-dehydroshikimate + NADPH + H(+). It participates in metabolic intermediate biosynthesis; chorismate biosynthesis; chorismate from D-erythrose 4-phosphate and phosphoenolpyruvate: step 4/7. In terms of biological role, involved in the biosynthesis of the chorismate, which leads to the biosynthesis of aromatic amino acids. Catalyzes the reversible NADPH linked reduction of 3-dehydroshikimate (DHSA) to yield shikimate (SA). The chain is Shikimate dehydrogenase (NADP(+)) from Rhodopseudomonas palustris (strain HaA2).